The chain runs to 463 residues: Ribosomal protein uS12 methylthiotransferase RimO (463 aa).

Residues 11-126 (PKIGFVSLGC…VMEVVHTHCP (116 aa)) enclose the MTTase N-terminal domain. Residues Cys20, Cys56, Cys85, Cys161, Cys165, and Cys168 each coordinate [4Fe-4S] cluster. Positions 147 to 388 (LTPRHYAYLK…MAVAEEVSTA (242 aa)) constitute a Radical SAM core domain. Residues 391–463 (QRRVGQTMQV…QGHDLVGVPV (73 aa)) enclose the TRAM domain.

This sequence belongs to the methylthiotransferase family. RimO subfamily. Requires [4Fe-4S] cluster as cofactor.

It is found in the cytoplasm. It carries out the reaction L-aspartate(89)-[ribosomal protein uS12]-hydrogen + (sulfur carrier)-SH + AH2 + 2 S-adenosyl-L-methionine = 3-methylsulfanyl-L-aspartate(89)-[ribosomal protein uS12]-hydrogen + (sulfur carrier)-H + 5'-deoxyadenosine + L-methionine + A + S-adenosyl-L-homocysteine + 2 H(+). Functionally, catalyzes the methylthiolation of an aspartic acid residue of ribosomal protein uS12. The sequence is that of Ribosomal protein uS12 methylthiotransferase RimO from Acidovorax sp. (strain JS42).